The sequence spans 278 residues: Small ribosomal subunit protein uS3 (278 aa).

The region spanning 39–107 (VRDFLKKRLA…PVHVNIEEVR (69 aa)) is the KH type-2 domain. The segment at 217–278 (VENENEARRG…DAAAVEKEVS (62 aa)) is disordered. Residues 230-239 (PRNDAGDNRG) show a composition bias toward basic and acidic residues.

Belongs to the universal ribosomal protein uS3 family. As to quaternary structure, part of the 30S ribosomal subunit. Forms a tight complex with proteins S10 and S14.

In terms of biological role, binds the lower part of the 30S subunit head. Binds mRNA in the 70S ribosome, positioning it for translation. This Aromatoleum aromaticum (strain DSM 19018 / LMG 30748 / EbN1) (Azoarcus sp. (strain EbN1)) protein is Small ribosomal subunit protein uS3.